The primary structure comprises 312 residues: Acetylglutamate kinase (312 aa).

Substrate is bound by residues 69–70 (GG), R91, and N191.

The protein belongs to the acetylglutamate kinase family. ArgB subfamily.

The protein localises to the cytoplasm. The catalysed reaction is N-acetyl-L-glutamate + ATP = N-acetyl-L-glutamyl 5-phosphate + ADP. The protein operates within amino-acid biosynthesis; L-arginine biosynthesis; N(2)-acetyl-L-ornithine from L-glutamate: step 2/4. Catalyzes the ATP-dependent phosphorylation of N-acetyl-L-glutamate. The polypeptide is Acetylglutamate kinase (Streptomyces griseus subsp. griseus (strain JCM 4626 / CBS 651.72 / NBRC 13350 / KCC S-0626 / ISP 5235)).